Here is a 625-residue protein sequence, read N- to C-terminus: Mesothelin (625 aa).

Positions 1–35 (MALPTAQPLLGSCGSPICSRSFLLLLLSLGWLPLL) are cleaved as a signal peptide. At Ser-202 the chain carries Phosphoserine. Cys-304 and Cys-328 are disulfide-bonded. Residues Asn-390, Asn-488, and Asn-517 are each glycosylated (N-linked (GlcNAc...) asparagine). Ser-600 is lipidated: GPI-anchor amidated serine. Positions 601-625 (SGAPLLGPGFVFAWIPALLSALRLS) are cleaved as a propeptide — removed in mature form.

This sequence belongs to the mesothelin family. Interacts with MUC16. Post-translationally, proteolytically cleaved by a furin-like convertase to generate megakaryocyte-potentiating factor (MPF), and the cleaved form of mesothelin. Specifically expressed in lung. Overexpressed in hereditary renal carcinoma developed by Eker rats.

It is found in the cell membrane. The protein resides in the golgi apparatus. Its subcellular location is the secreted. In terms of biological role, membrane-anchored forms may play a role in cellular adhesion. Its function is as follows. Megakaryocyte-potentiating factor (MPF) may potentiate megakaryocyte colony formation. This is Mesothelin (Msln) from Rattus norvegicus (Rat).